Reading from the N-terminus, the 86-residue chain is Exodeoxyribonuclease 7 small subunit (86 aa).

Residues methionine 1–phenylalanine 27 form a disordered region.

It belongs to the XseB family. In terms of assembly, heterooligomer composed of large and small subunits.

It localises to the cytoplasm. The catalysed reaction is Exonucleolytic cleavage in either 5'- to 3'- or 3'- to 5'-direction to yield nucleoside 5'-phosphates.. Bidirectionally degrades single-stranded DNA into large acid-insoluble oligonucleotides, which are then degraded further into small acid-soluble oligonucleotides. The chain is Exodeoxyribonuclease 7 small subunit from Helicobacter pylori (strain G27).